Here is a 135-residue protein sequence, read N- to C-terminus: Small ribosomal subunit protein uS12 (135 aa).

Aspartate 89 carries the post-translational modification 3-methylthioaspartic acid. Positions 108–135 are disordered; sequence NKRTVSRSKYGTKKAKATDKKATDSKKK. Over residues 111-122 the composition is skewed to basic residues; sequence TVSRSKYGTKKA. Basic and acidic residues predominate over residues 123 to 135; sequence KATDKKATDSKKK.

This sequence belongs to the universal ribosomal protein uS12 family. In terms of assembly, part of the 30S ribosomal subunit. Contacts proteins S8 and S17. May interact with IF1 in the 30S initiation complex.

Functionally, with S4 and S5 plays an important role in translational accuracy. Interacts with and stabilizes bases of the 16S rRNA that are involved in tRNA selection in the A site and with the mRNA backbone. Located at the interface of the 30S and 50S subunits, it traverses the body of the 30S subunit contacting proteins on the other side and probably holding the rRNA structure together. The combined cluster of proteins S8, S12 and S17 appears to hold together the shoulder and platform of the 30S subunit. This is Small ribosomal subunit protein uS12 from Helicobacter pylori (strain HPAG1).